We begin with the raw amino-acid sequence, 260 residues long: Imidazole glycerol phosphate synthase subunit HisF (260 aa).

Active-site residues include D11 and D130.

This sequence belongs to the HisA/HisF family. Heterodimer of HisH and HisF.

Its subcellular location is the cytoplasm. It carries out the reaction 5-[(5-phospho-1-deoxy-D-ribulos-1-ylimino)methylamino]-1-(5-phospho-beta-D-ribosyl)imidazole-4-carboxamide + L-glutamine = D-erythro-1-(imidazol-4-yl)glycerol 3-phosphate + 5-amino-1-(5-phospho-beta-D-ribosyl)imidazole-4-carboxamide + L-glutamate + H(+). Its pathway is amino-acid biosynthesis; L-histidine biosynthesis; L-histidine from 5-phospho-alpha-D-ribose 1-diphosphate: step 5/9. Its function is as follows. IGPS catalyzes the conversion of PRFAR and glutamine to IGP, AICAR and glutamate. The HisF subunit catalyzes the cyclization activity that produces IGP and AICAR from PRFAR using the ammonia provided by the HisH subunit. The protein is Imidazole glycerol phosphate synthase subunit HisF of Thermomicrobium roseum (strain ATCC 27502 / DSM 5159 / P-2).